The following is a 994-amino-acid chain: Valine--tRNA ligase (994 aa).

The 'HIGH' region motif lies at 43-53 (PNVTGTLHMGH). Positions 329–345 (QSGMPSGATSDTTNTPS) are enriched in polar residues. The segment at 329–355 (QSGMPSGATSDTTNTPSDPEASSAANQ) is disordered. The 'KMSKS' region motif lies at 585–589 (KMSKS). Lys-588 contributes to the ATP binding site. Residues 692-714 (AHSPAQHQAGQDGQDAPRTPQPR) form a disordered region. Over residues 696 to 707 (AQHQAGQDGQDA) the composition is skewed to low complexity. A coiled-coil region spans residues 928–994 (LIDVDAERVR…NGLRERRATL (67 aa)).

It belongs to the class-I aminoacyl-tRNA synthetase family. ValS type 1 subfamily. In terms of assembly, monomer.

It is found in the cytoplasm. The catalysed reaction is tRNA(Val) + L-valine + ATP = L-valyl-tRNA(Val) + AMP + diphosphate. Catalyzes the attachment of valine to tRNA(Val). As ValRS can inadvertently accommodate and process structurally similar amino acids such as threonine, to avoid such errors, it has a 'posttransfer' editing activity that hydrolyzes mischarged Thr-tRNA(Val) in a tRNA-dependent manner. The protein is Valine--tRNA ligase of Xylella fastidiosa (strain 9a5c).